The primary structure comprises 253 residues: uncharacterized protein (253 aa).

The 207-residue stretch at 30–236 (AQGRQVAQLW…AVDDDAALMA (207 aa)) folds into the BPL/LPL catalytic domain.

This is an uncharacterized protein from Cupriavidus necator (strain ATCC 17699 / DSM 428 / KCTC 22496 / NCIMB 10442 / H16 / Stanier 337) (Ralstonia eutropha).